The chain runs to 150 residues: Putative ribosome maturation factor RimP (150 aa).

It belongs to the RimP family.

The protein localises to the cytoplasm. Functionally, required for maturation of 30S ribosomal subunits. The chain is Putative ribosome maturation factor RimP from Mycobacterium leprae (strain TN).